Reading from the N-terminus, the 599-residue chain is Sulfite reductase [NADPH] flavoprotein alpha-component (599 aa).

Positions 64 to 202 (ITIISASQTG…AASEWRARVV (139 aa)) constitute a Flavodoxin-like domain. FMN is bound by residues 70–75 (SQTGNA), 117–120 (STQG), and 153–162 (LGDSSYEFFC). The FAD-binding FR-type domain occupies 234 to 448 (DAPLAASLSV…IEHNDNFRLP (215 aa)). FAD contacts are provided by residues T322, A356, 386-389 (RLYS), 404-406 (TVG), Y410, and 419-422 (GGAS). NADP(+)-binding positions include 519 to 520 (SR), 525 to 529 (KIYVQ), and D561. Y599 serves as a coordination point for FAD.

This sequence belongs to the NADPH-dependent sulphite reductase flavoprotein subunit CysJ family. In the N-terminal section; belongs to the flavodoxin family. The protein in the C-terminal section; belongs to the flavoprotein pyridine nucleotide cytochrome reductase family. In terms of assembly, alpha(8)-beta(8). The alpha component is a flavoprotein, the beta component is a hemoprotein. FAD is required as a cofactor. FMN serves as cofactor.

The enzyme catalyses hydrogen sulfide + 3 NADP(+) + 3 H2O = sulfite + 3 NADPH + 4 H(+). It functions in the pathway sulfur metabolism; hydrogen sulfide biosynthesis; hydrogen sulfide from sulfite (NADPH route): step 1/1. In terms of biological role, component of the sulfite reductase complex that catalyzes the 6-electron reduction of sulfite to sulfide. This is one of several activities required for the biosynthesis of L-cysteine from sulfate. The flavoprotein component catalyzes the electron flow from NADPH -&gt; FAD -&gt; FMN to the hemoprotein component. The protein is Sulfite reductase [NADPH] flavoprotein alpha-component of Escherichia coli O6:K15:H31 (strain 536 / UPEC).